We begin with the raw amino-acid sequence, 263 residues long: MTHPQPFIAVIPARLASTRLPNKPLADLGGKPMVVRVAERAREAGAQQVLIASDAQSVLDAARDHGFEAVLTRADHPSGTDRLAEVAATFGWSDDTVVVNVQGDEPLIDPVLVRDVASHLAAHPDCAIATAAHPIHDAADVFNPNVVKVALDARNVAMYFSRAPIPWSRDAYLPHWPDVSAMPAPAFPVHRHIGLYAYRARFLRTYPSLAQAPVEQAEQLEQLRAMWHGERIAVLITEHAPEAGIDTPADLARVQALFRPGSK.

The protein belongs to the KdsB family.

It is found in the cytoplasm. The enzyme catalyses 3-deoxy-alpha-D-manno-oct-2-ulosonate + CTP = CMP-3-deoxy-beta-D-manno-octulosonate + diphosphate. The protein operates within nucleotide-sugar biosynthesis; CMP-3-deoxy-D-manno-octulosonate biosynthesis; CMP-3-deoxy-D-manno-octulosonate from 3-deoxy-D-manno-octulosonate and CTP: step 1/1. Its pathway is bacterial outer membrane biogenesis; lipopolysaccharide biosynthesis. Activates KDO (a required 8-carbon sugar) for incorporation into bacterial lipopolysaccharide in Gram-negative bacteria. The sequence is that of 3-deoxy-manno-octulosonate cytidylyltransferase 1 from Burkholderia ambifaria (strain ATCC BAA-244 / DSM 16087 / CCUG 44356 / LMG 19182 / AMMD) (Burkholderia cepacia (strain AMMD)).